The following is a 466-amino-acid chain: Light-independent protochlorophyllide reductase subunit N (466 aa).

3 residues coordinate [4Fe-4S] cluster: C23, C48, and C108.

It belongs to the BchN/ChlN family. In terms of assembly, protochlorophyllide reductase is composed of three subunits; ChlL, ChlN and ChlB. Forms a heterotetramer of two ChlB and two ChlN subunits. [4Fe-4S] cluster is required as a cofactor.

The catalysed reaction is chlorophyllide a + oxidized 2[4Fe-4S]-[ferredoxin] + 2 ADP + 2 phosphate = protochlorophyllide a + reduced 2[4Fe-4S]-[ferredoxin] + 2 ATP + 2 H2O. It functions in the pathway porphyrin-containing compound metabolism; chlorophyll biosynthesis (light-independent). Component of the dark-operative protochlorophyllide reductase (DPOR) that uses Mg-ATP and reduced ferredoxin to reduce ring D of protochlorophyllide (Pchlide) to form chlorophyllide a (Chlide). This reaction is light-independent. The NB-protein (ChlN-ChlB) is the catalytic component of the complex. This is Light-independent protochlorophyllide reductase subunit N from Synechococcus elongatus (strain ATCC 33912 / PCC 7942 / FACHB-805) (Anacystis nidulans R2).